Reading from the N-terminus, the 101-residue chain is Small ribosomal subunit protein bS18c (101 aa).

Belongs to the bacterial ribosomal protein bS18 family. In terms of assembly, part of the 30S ribosomal subunit.

It is found in the plastid. The protein resides in the chloroplast. The polypeptide is Small ribosomal subunit protein bS18c (Gossypium barbadense (Sea Island cotton)).